A 243-amino-acid chain; its full sequence is Phosphoribosylaminoimidazole-succinocarboxamide synthase (243 aa).

This sequence belongs to the SAICAR synthetase family.

The enzyme catalyses 5-amino-1-(5-phospho-D-ribosyl)imidazole-4-carboxylate + L-aspartate + ATP = (2S)-2-[5-amino-1-(5-phospho-beta-D-ribosyl)imidazole-4-carboxamido]succinate + ADP + phosphate + 2 H(+). It functions in the pathway purine metabolism; IMP biosynthesis via de novo pathway; 5-amino-1-(5-phospho-D-ribosyl)imidazole-4-carboxamide from 5-amino-1-(5-phospho-D-ribosyl)imidazole-4-carboxylate: step 1/2. In Methanobrevibacter smithii (strain ATCC 35061 / DSM 861 / OCM 144 / PS), this protein is Phosphoribosylaminoimidazole-succinocarboxamide synthase.